The chain runs to 378 residues: Erythronate-4-phosphate dehydrogenase (378 aa).

Positions 45 and 66 each coordinate substrate. 2 residues coordinate NAD(+): Asp146 and Thr175. Arg208 is a catalytic residue. Asp232 serves as a coordination point for NAD(+). Glu237 is an active-site residue. The Proton donor role is filled by His254. Gly257 is an NAD(+) binding site. Residue Tyr258 coordinates substrate.

The protein belongs to the D-isomer specific 2-hydroxyacid dehydrogenase family. PdxB subfamily. Homodimer.

It localises to the cytoplasm. The catalysed reaction is 4-phospho-D-erythronate + NAD(+) = (R)-3-hydroxy-2-oxo-4-phosphooxybutanoate + NADH + H(+). Its pathway is cofactor biosynthesis; pyridoxine 5'-phosphate biosynthesis; pyridoxine 5'-phosphate from D-erythrose 4-phosphate: step 2/5. Catalyzes the oxidation of erythronate-4-phosphate to 3-hydroxy-2-oxo-4-phosphonooxybutanoate. This chain is Erythronate-4-phosphate dehydrogenase, found in Enterobacter sp. (strain 638).